Reading from the N-terminus, the 480-residue chain is Proline--tRNA ligase (480 aa).

This sequence belongs to the class-II aminoacyl-tRNA synthetase family. ProS type 3 subfamily. As to quaternary structure, homodimer.

The protein resides in the cytoplasm. The enzyme catalyses tRNA(Pro) + L-proline + ATP = L-prolyl-tRNA(Pro) + AMP + diphosphate. Its function is as follows. Catalyzes the attachment of proline to tRNA(Pro) in a two-step reaction: proline is first activated by ATP to form Pro-AMP and then transferred to the acceptor end of tRNA(Pro). In Roseiflexus castenholzii (strain DSM 13941 / HLO8), this protein is Proline--tRNA ligase.